We begin with the raw amino-acid sequence, 205 residues long: Rho-related protein racI (205 aa).

12–19 (GDSKTGKT) lines the GTP pocket. The short motif at 34–42 (YVPSHVDAT) is the Effector region element. GTP contacts are provided by residues 59-63 (DSSAL) and 119-122 (TKCD). Cysteine 202 is subject to Cysteine methyl ester. Cysteine 202 carries the S-geranylgeranyl cysteine lipid modification. A propeptide spans 203–205 (IIQ) (removed in mature form).

The protein belongs to the small GTPase superfamily. Rho family.

The protein resides in the cell membrane. In Dictyostelium discoideum (Social amoeba), this protein is Rho-related protein racI (racI).